Consider the following 168-residue polypeptide: UPF0114 protein PC1_0431 (168 aa).

Transmembrane regions (helical) follow at residues 15 to 35, 53 to 73, and 136 to 156; these read LLAPVYLGLSLGLLALAIKFF, LVLVLLSLIDMTLVGGLLVMV, and LMWYVIIHLTFVLSALVMGYL.

This sequence belongs to the UPF0114 family.

It localises to the cell membrane. In Pectobacterium carotovorum subsp. carotovorum (strain PC1), this protein is UPF0114 protein PC1_0431.